The sequence spans 317 residues: tRNA dimethylallyltransferase (317 aa).

ATP is bound at residue 19–26; it reads GPTASGKS. 21-26 is a binding site for substrate; sequence TASGKS. The interaction with substrate tRNA stretch occupies residues 44 to 47; that stretch reads DSMQ.

The protein belongs to the IPP transferase family. Monomer. It depends on Mg(2+) as a cofactor.

It carries out the reaction adenosine(37) in tRNA + dimethylallyl diphosphate = N(6)-dimethylallyladenosine(37) in tRNA + diphosphate. Its function is as follows. Catalyzes the transfer of a dimethylallyl group onto the adenine at position 37 in tRNAs that read codons beginning with uridine, leading to the formation of N6-(dimethylallyl)adenosine (i(6)A). The protein is tRNA dimethylallyltransferase of Methylorubrum extorquens (strain CM4 / NCIMB 13688) (Methylobacterium extorquens).